Here is a 330-residue protein sequence, read N- to C-terminus: 4,5-dihydroxyphthalate decarboxylase (330 aa).

This sequence to P.putida DHP decarboxylase.

It carries out the reaction 4,5-dihydroxyphthalate + H(+) = 3,4-dihydroxybenzoate + CO2. Its pathway is xenobiotic degradation; phthalate degradation; 3,4-dihydroxybenzoate from phthalate: step 3/3. The protein is 4,5-dihydroxyphthalate decarboxylase (phtD) of Comamonas testosteroni (Pseudomonas testosteroni).